Consider the following 70-residue polypeptide: uncharacterized protein (70 aa).

This is an uncharacterized protein from Haloarcula hispanica (His1V).